We begin with the raw amino-acid sequence, 1313 residues long: Angiotensin-converting enzyme (1313 aa).

The N-terminal stretch at 1–35 (MGAASGQRGRWPLSPPLLMLSLLLLLLLPPSPAPA) is a signal peptide. Residues 36 to 1265 (LDPGLQPGNF…LEPQQARVGQ (1230 aa)) are Extracellular-facing. N-linked (GlcNAc...) asparagine glycosylation is found at Asn44, Asn60, Asn80, Asn117, Asn152, and Asn166. Peptidase M2 domains lie at 46 to 630 (SADE…LGWP) and 649 to 1228 (ETDE…LGWP). Cysteines 163 and 171 form a disulfide. Tyr237 is a binding site for chloride. A glycan (N-linked (GlcNAc...) asparagine) is linked at Asn324. A disulfide bond links Cys365 and Cys383. His396 provides a ligand contact to Zn(2+). Residue Glu397 is the Proton acceptor 1 of the active site. Zn(2+)-binding residues include His400 and Glu424. Asn515 carries N-linked (GlcNAc...) asparagine glycosylation. Residue His526 is the Proton donor 1 of the active site. Chloride is bound at residue Arg535. Cys551 and Cys563 are disulfide-bonded. 4 N-linked (GlcNAc...) asparagine glycosylation sites follow: Asn683, Asn701, Asn720, and Asn766. Cysteines 763 and 769 form a disulfide. 2 residues coordinate chloride: Arg797 and Tyr835. Asn948 carries N-linked (GlcNAc...) asparagine glycosylation. Cysteines 963 and 981 form a disulfide. His994 provides a ligand contact to Zn(2+). Glu995 acts as the Proton acceptor 2 in catalysis. 2 residues coordinate Zn(2+): His998 and Glu1022. Chloride-binding residues include Trp1096 and Arg1100. His1124 functions as the Proton donor 2 in the catalytic mechanism. Arg1133 is a binding site for chloride. The cysteines at positions 1149 and 1161 are disulfide-linked. N-linked (GlcNAc...) asparagine glycosylation occurs at Asn1197. The segment at 1221 to 1262 (HGETLGWPEYTWTPNTARAEGSLPESSRVNFLGMYLEPQQAR) is juxtamembrane stalk. The chain crosses the membrane as a helical span at residues 1266-1282 (WVLLFLGVALLVATVGL). The Cytoplasmic segment spans residues 1283–1313 (AHRLYNIHNHHSLRRPHRGPQFGSEVELRHS). Phosphoserine is present on Ser1306.

The protein belongs to the peptidase M2 family. As to quaternary structure, monomer and homodimer; homodimerizes following binding to an inhibitor. Interacts with calmodulin (CALM1, CALM2 or CALM3); interaction takes place in the cytoplasmic region and regulates phosphorylation and proteolytic cleavage. It depends on Zn(2+) as a cofactor. The cofactor is chloride. Post-translationally, produced following proteolytic cleavage by secretase enzymes that cleave the transmembrane form in the juxtamembrane stalk region upstream of the transmembrane region. Cleavage can take place at different sites of the juxtamembrane stalk region. Phosphorylated by CK2 on Ser-1306; which allows membrane retention. Phosphorylated on tyrosine residues on its extracellular part, promoting cleavage by secretase enzymes and formation of the soluble form (Angiotensin-converting enzyme, soluble form). In terms of tissue distribution, expressed in brain, kidney, lung, skeletal muscle and heart. Testis-specific isoform is expressed in spermatocytes, adult testis.

It is found in the cell membrane. The protein localises to the cytoplasm. It localises to the secreted. It carries out the reaction Release of a C-terminal dipeptide, oligopeptide-|-Xaa-Yaa, when Xaa is not Pro, and Yaa is neither Asp nor Glu. Thus, conversion of angiotensin I to angiotensin II, with increase in vasoconstrictor activity, but no action on angiotensin II.. The catalysed reaction is angiotensin I + H2O = L-histidyl-L-leucine + angiotensin II. It catalyses the reaction bradykinin + H2O = L-Phe-L-Arg + bradykinin(1-7). The enzyme catalyses substance P + H2O = substance P(1-9) + L-Leu-L-Met-NH2. It carries out the reaction substance P + H2O = substance P(1-8) + Gly-L-Leu-L-Met-NH2. The catalysed reaction is substance P + H2O = L-Phe-L-Phe-Gly-L-Leu-L-Met-NH2 + substance P(1-6). It catalyses the reaction neurotensin + H2O = neurotensin(1-11) + L-isoleucyl-L-leucine. The enzyme catalyses goralatide + H2O = N-acetyl-L-seryl-L-aspartate + L-lysyl-L-proline. It carries out the reaction Met-enkephalin + H2O = L-phenylalanyl-L-methionine + L-tyrosylglycylglycine. The catalysed reaction is Leu-enkephalin + H2O = L-tyrosylglycylglycine + L-phenylalanyl-L-leucine. It catalyses the reaction Met-enkephalin-Arg-Phe + H2O = L-arginyl-L-phenylalanine + Met-enkephalin. With respect to regulation, the dipeptidyl carboxypeptidase activity is strongly activated by chloride. The dipeptidyl carboxypeptidase activity is specifically inhibited by lisinopril, captopril and enalaprilat. Its activity is regulated as follows. Strongly inhibited by lisinopril and captopril. Functionally, dipeptidyl carboxypeptidase that removes dipeptides from the C-terminus of a variety of circulating hormones, such as angiotensin I, bradykinin or enkephalins, thereby playing a key role in the regulation of blood pressure, electrolyte homeostasis or synaptic plasticity. Composed of two similar catalytic domains, each possessing a functional active site, with different selectivity for substrates. Plays a major role in the angiotensin-renin system that regulates blood pressure and sodium retention by the kidney by converting angiotensin I to angiotensin II, resulting in an increase of the vasoconstrictor activity of angiotensin. Also able to inactivate bradykinin, a potent vasodilator, and therefore enhance the blood pressure response. Acts as a regulator of synaptic transmission by mediating cleavage of neuropeptide hormones, such as substance P, neurotensin or enkephalins. Catalyzes degradation of different enkephalin neuropeptides (Met-enkephalin, Leu-enkephalin, Met-enkephalin-Arg-Phe and possibly Met-enkephalin-Arg-Gly-Leu). Acts as a regulator of synaptic plasticity in the nucleus accumbens of the brain by mediating cleavage of Met-enkephalin-Arg-Phe, a strong ligand of Mu-type opioid receptor OPRM1, into Met-enkephalin. Met-enkephalin-Arg-Phe cleavage by ACE decreases activation of OPRM1, leading to long-term synaptic potentiation of glutamate release. Also acts as a regulator of hematopoietic stem cell differentiation by mediating degradation of hemoregulatory peptide N-acetyl-SDKP (AcSDKP). Acts as a regulator of cannabinoid signaling pathway by mediating degradation of hemopressin, an antagonist peptide of the cannabinoid receptor CNR1. Involved in amyloid-beta metabolism by catalyzing degradation of Amyloid-beta protein 40 and Amyloid-beta protein 42 peptides, thereby preventing plaque formation. Catalyzes cleavage of cholecystokinin (maturation of Cholecystokinin-8 and Cholecystokinin-5) and Gonadoliberin-1 (both maturation and degradation) hormones. Degradation of hemoregulatory peptide N-acetyl-SDKP (AcSDKP) and amyloid-beta proteins is mediated by the N-terminal catalytic domain, while angiotensin I and cholecystokinin cleavage is mediated by the C-terminal catalytic region. Soluble form that is released in blood plasma and other body fluids following proteolytic cleavage in the juxtamembrane stalk region. In terms of biological role, isoform produced by alternative promoter usage that is specifically expressed in spermatocytes and adult testis, and which is required for male fertility. In contrast to somatic isoforms, only contains one catalytic domain. Acts as a dipeptidyl carboxypeptidase that removes dipeptides from the C-terminus of substrates. The identity of substrates that are needed for male fertility is unknown. May also have a glycosidase activity which releases GPI-anchored proteins from the membrane by cleaving the mannose linkage in the GPI moiety. The GPIase activity was reported to be essential for the egg-binding ability of the sperm. This activity is however unclear and has been challenged by other groups, suggesting that it may be indirect. In Rattus norvegicus (Rat), this protein is Angiotensin-converting enzyme.